A 685-amino-acid chain; its full sequence is Methionine--tRNA ligase (685 aa).

Zn(2+)-binding residues include Cys-142, Cys-145, Cys-155, and Cys-158. The 'KMSKS' region motif lies at 330-334 (KMSKS). Lys-333 serves as a coordination point for ATP. Residues 584–685 (DFIKVDLRVA…SGAKPGDKVS (102 aa)) form the tRNA-binding domain.

This sequence belongs to the class-I aminoacyl-tRNA synthetase family. MetG type 1 subfamily. In terms of assembly, homodimer. It depends on Zn(2+) as a cofactor.

It localises to the cytoplasm. The catalysed reaction is tRNA(Met) + L-methionine + ATP = L-methionyl-tRNA(Met) + AMP + diphosphate. Functionally, is required not only for elongation of protein synthesis but also for the initiation of all mRNA translation through initiator tRNA(fMet) aminoacylation. This is Methionine--tRNA ligase from Acinetobacter baylyi (strain ATCC 33305 / BD413 / ADP1).